We begin with the raw amino-acid sequence, 147 residues long: Hemoglobin subunit epsilon (147 aa).

The Globin domain occupies 3 to 147; it reads HFTAEEKSTI…VATALAHKYH (145 aa). Ser14 and Ser51 each carry phosphoserine. Residues His64 and His93 each contribute to the heme b site.

Belongs to the globin family. Heterotetramer of two alpha chains and two epsilon chains in early embryonic hemoglobin Gower-2; two zeta chains and two epsilon chains in early embryonic hemoglobin Gower-1. As to expression, red blood cells.

In terms of biological role, the epsilon chain is a beta-type chain of early mammalian embryonic hemoglobin. This chain is Hemoglobin subunit epsilon (HBE1), found in Microcebus murinus (Gray mouse lemur).